Consider the following 156-residue polypeptide: Endoribonuclease YbeY (156 aa).

The Zn(2+) site is built by His-122, His-126, and His-132.

Belongs to the endoribonuclease YbeY family. Zn(2+) is required as a cofactor.

The protein localises to the cytoplasm. Single strand-specific metallo-endoribonuclease involved in late-stage 70S ribosome quality control and in maturation of the 3' terminus of the 16S rRNA. In Geobacillus thermodenitrificans (strain NG80-2), this protein is Endoribonuclease YbeY.